Here is a 425-residue protein sequence, read N- to C-terminus: Enolase (425 aa).

Residue glutamine 162 coordinates (2R)-2-phosphoglycerate. Glutamate 204 acts as the Proton donor in catalysis. Aspartate 241, glutamate 284, and aspartate 311 together coordinate Mg(2+). Residues lysine 336, arginine 365, serine 366, and lysine 387 each coordinate (2R)-2-phosphoglycerate. Lysine 336 (proton acceptor) is an active-site residue.

Belongs to the enolase family. Requires Mg(2+) as cofactor.

It localises to the cytoplasm. Its subcellular location is the secreted. The protein resides in the cell surface. It catalyses the reaction (2R)-2-phosphoglycerate = phosphoenolpyruvate + H2O. It participates in carbohydrate degradation; glycolysis; pyruvate from D-glyceraldehyde 3-phosphate: step 4/5. In terms of biological role, catalyzes the reversible conversion of 2-phosphoglycerate (2-PG) into phosphoenolpyruvate (PEP). It is essential for the degradation of carbohydrates via glycolysis. This chain is Enolase, found in Brucella ovis (strain ATCC 25840 / 63/290 / NCTC 10512).